An 86-amino-acid chain; its full sequence is Small ribosomal subunit protein bS16 (86 aa).

The protein belongs to the bacterial ribosomal protein bS16 family.

This chain is Small ribosomal subunit protein bS16, found in Nostoc punctiforme (strain ATCC 29133 / PCC 73102).